A 343-amino-acid chain; its full sequence is SET and MYND domain-containing protein DDB_G0292454 (343 aa).

Residues 77–307 (EPFISYPSII…PGDEITISYT (231 aa)) enclose the SET domain. Zn(2+) is bound by residues Cys-93, Cys-96, Cys-111, Cys-114, Cys-120, Cys-124, His-133, and Cys-137. The segment at 93-137 (CNHCLKEIKKEEEEIKQECEECKVYKYCSIECKEKSSIEYHSVLC) adopts an MYND-type zinc-finger fold.

It belongs to the class V-like SAM-binding methyltransferase superfamily.

Its function is as follows. Probable methyltransferase. The polypeptide is SET and MYND domain-containing protein DDB_G0292454 (Dictyostelium discoideum (Social amoeba)).